Reading from the N-terminus, the 198-residue chain is uncharacterized protein (198 aa).

This is an uncharacterized protein from Bacillus subtilis (strain 168).